We begin with the raw amino-acid sequence, 462 residues long: Light-independent protochlorophyllide reductase subunit N (462 aa).

Cysteine 24, cysteine 49, and cysteine 109 together coordinate [4Fe-4S] cluster.

This sequence belongs to the BchN/ChlN family. In terms of assembly, protochlorophyllide reductase is composed of three subunits; ChlL, ChlN and ChlB. Forms a heterotetramer of two ChlB and two ChlN subunits. [4Fe-4S] cluster serves as cofactor.

The protein localises to the plastid. It localises to the chloroplast. It catalyses the reaction chlorophyllide a + oxidized 2[4Fe-4S]-[ferredoxin] + 2 ADP + 2 phosphate = protochlorophyllide a + reduced 2[4Fe-4S]-[ferredoxin] + 2 ATP + 2 H2O. It functions in the pathway porphyrin-containing compound metabolism; chlorophyll biosynthesis (light-independent). Functionally, component of the dark-operative protochlorophyllide reductase (DPOR) that uses Mg-ATP and reduced ferredoxin to reduce ring D of protochlorophyllide (Pchlide) to form chlorophyllide a (Chlide). This reaction is light-independent. The NB-protein (ChlN-ChlB) is the catalytic component of the complex. The polypeptide is Light-independent protochlorophyllide reductase subunit N (Pleurastrum terricola (Filamentous green alga)).